Reading from the N-terminus, the 338-residue chain is Holliday junction branch migration complex subunit RuvB (338 aa).

The segment at 4 to 184 (ADRLMSAAAV…FGIVQRLEFY (181 aa)) is large ATPase domain (RuvB-L). ATP-binding positions include isoleucine 23, arginine 24, glycine 65, lysine 68, threonine 69, threonine 70, 131–133 (EDY), arginine 174, tyrosine 184, and arginine 221. Residue threonine 69 coordinates Mg(2+). Residues 185–255 (QTGDLQHIVS…VAVSALNMLN (71 aa)) are small ATPAse domain (RuvB-S). The tract at residues 258 to 338 (TEGFDFMDRK…GLEEHGGDPE (81 aa)) is head domain (RuvB-H). Residues arginine 294, arginine 313, and arginine 318 each contribute to the DNA site.

Belongs to the RuvB family. In terms of assembly, homohexamer. Forms an RuvA(8)-RuvB(12)-Holliday junction (HJ) complex. HJ DNA is sandwiched between 2 RuvA tetramers; dsDNA enters through RuvA and exits via RuvB. An RuvB hexamer assembles on each DNA strand where it exits the tetramer. Each RuvB hexamer is contacted by two RuvA subunits (via domain III) on 2 adjacent RuvB subunits; this complex drives branch migration. In the full resolvosome a probable DNA-RuvA(4)-RuvB(12)-RuvC(2) complex forms which resolves the HJ.

It localises to the cytoplasm. It carries out the reaction ATP + H2O = ADP + phosphate + H(+). In terms of biological role, the RuvA-RuvB-RuvC complex processes Holliday junction (HJ) DNA during genetic recombination and DNA repair, while the RuvA-RuvB complex plays an important role in the rescue of blocked DNA replication forks via replication fork reversal (RFR). RuvA specifically binds to HJ cruciform DNA, conferring on it an open structure. The RuvB hexamer acts as an ATP-dependent pump, pulling dsDNA into and through the RuvAB complex. RuvB forms 2 homohexamers on either side of HJ DNA bound by 1 or 2 RuvA tetramers; 4 subunits per hexamer contact DNA at a time. Coordinated motions by a converter formed by DNA-disengaged RuvB subunits stimulates ATP hydrolysis and nucleotide exchange. Immobilization of the converter enables RuvB to convert the ATP-contained energy into a lever motion, pulling 2 nucleotides of DNA out of the RuvA tetramer per ATP hydrolyzed, thus driving DNA branch migration. The RuvB motors rotate together with the DNA substrate, which together with the progressing nucleotide cycle form the mechanistic basis for DNA recombination by continuous HJ branch migration. Branch migration allows RuvC to scan DNA until it finds its consensus sequence, where it cleaves and resolves cruciform DNA. This is Holliday junction branch migration complex subunit RuvB from Sodalis glossinidius (strain morsitans).